The sequence spans 530 residues: MSIDTYTETLKINKLIEKATSHFQLSSTQLYKKILKNHEGELTELGAINVKTGKYTGRSPKDKFIVTEPSYKDNINWGDINQPMDEETFLKLYNKVLDYLNQKEELYIFSGYAGSDKESRLKLKVINELAWHNLFARNMFIRPESIDEAQNIKPNFTIVSAPHFKANPKLDGTHSETFVIISFKHKVILIGGTEYAGEMKKGIFSVMNYLLPIQDIMSMHCSANVGEKGDVALFFGLSGTGKTTLSADPKRKLIGDDEHGWNKNGVFNIEGGCYAKAIHLSKQKEPQIYNAIKYGTILENTVTNDDGTVDFDDNTYTENTRAAYPIDYIENIVTPSKAAHPNTIIFLTADAFGVIPPISKLTKDQAMYHFLSGFTSKLAGTERGVTEPQPSFSTCFGAPFLPLSPTKYADLLGNLIDIHDVDVYLVNTGWTGGKYGVGRRISLHYTREMVDQAISGKLKNTKYIKDDTFGLNIPVQIDSVPTTILNPINAWNNKDNYKAQAYDLIQRFNNNFKKFGKEVEHIANKGAFNQ.

Positions 58, 195, and 201 each coordinate substrate. ATP contacts are provided by residues K201, H220, and 236–244 (GLSGTGKTT). Positions 201 and 220 each coordinate Mn(2+). Position 257 (D257) interacts with Mn(2+). ATP-binding positions include E285, R321, 440-441 (RI), and T446. Position 321 (R321) interacts with substrate.

Belongs to the phosphoenolpyruvate carboxykinase (ATP) family. Mn(2+) serves as cofactor.

Its subcellular location is the cytoplasm. It catalyses the reaction oxaloacetate + ATP = phosphoenolpyruvate + ADP + CO2. Its pathway is carbohydrate biosynthesis; gluconeogenesis. In terms of biological role, involved in the gluconeogenesis. Catalyzes the conversion of oxaloacetate (OAA) to phosphoenolpyruvate (PEP) through direct phosphoryl transfer between the nucleoside triphosphate and OAA. This chain is Phosphoenolpyruvate carboxykinase (ATP), found in Staphylococcus epidermidis (strain ATCC 35984 / DSM 28319 / BCRC 17069 / CCUG 31568 / BM 3577 / RP62A).